The following is a 357-amino-acid chain: Glucose-6-phosphatase catalytic subunit 1 (357 aa).

Topologically, residues M1–D28 are lumenal. A helical transmembrane segment spans residues W29–I49. Residues W50–N60 lie on the Cytoplasmic side of the membrane. Residues L61–G81 form a helical membrane-spanning segment. The Lumenal segment spans residues Q82 to S117. Substrate is bound at residue R83. Residue N96 is glycosylated (N-linked (GlcNAc...) asparagine). Residues G118–F138 form a helical membrane-spanning segment. The active-site Proton donor is the H119. Over R139–G147 the chain is Cytoplasmic. A helical membrane pass occupies residues F148–L168. Residues S169–R170 lie on the Lumenal side of the membrane. R170 serves as a coordination point for substrate. A helical transmembrane segment spans residues I171–V191. Catalysis depends on H176, which acts as the Nucleophile. Topologically, residues A192–L211 are cytoplasmic. A helical transmembrane segment spans residues I212 to V232. Residues D233–D254 lie on the Lumenal side of the membrane. A helical membrane pass occupies residues T255–L275. The Cytoplasmic portion of the chain corresponds to N276–S291. Residues L292–L312 form a helical membrane-spanning segment. The Lumenal segment spans residues K313–S320. Residues I321–I341 form a helical membrane-spanning segment. The Cytoplasmic portion of the chain corresponds to P342–L357. The short motif at K354–L357 is the Prevents secretion from ER element.

This sequence belongs to the glucose-6-phosphatase family.

The protein localises to the endoplasmic reticulum membrane. It carries out the reaction D-glucose 6-phosphate + H2O = D-glucose + phosphate. The protein operates within carbohydrate biosynthesis; gluconeogenesis. Its function is as follows. Hydrolyzes glucose-6-phosphate to glucose in the endoplasmic reticulum. Forms with the glucose-6-phosphate transporter (SLC37A4/G6PT) the complex responsible for glucose production in the terminal step of glycogenolysis and gluconeogenesis. Hence, it is the key enzyme in homeostatic regulation of blood glucose levels. This is Glucose-6-phosphatase catalytic subunit 1 (G6pc1) from Rattus norvegicus (Rat).